The primary structure comprises 663 residues: Probable acetolactate synthase 2, chloroplastic (663 aa).

Over residues 1 to 26 (MAAAAAAASLSVSDAAAKLPKPGGQV) the composition is skewed to low complexity. The tract at residues 1–56 (MAAAAAAASLSVSDAAAKLPKPGGQVQRRRDRDRPRVDAAACTRDSRRPTRERCST) is disordered. Residues 1–79 (MAAAAAAASL…TPVRAPVRTR (79 aa)) constitute a chloroplast transit peptide. 2 stretches are compositionally biased toward basic and acidic residues: residues 28–37 (RRRDRDRPRV) and 44–54 (RDSRRPTRERC). Glu132 lines the thiamine diphosphate pocket. An intrachain disulfide couples Cys152 to Cys298. Residues Arg234, 340 to 361 (HGTVYANYAVDNADLLLALGVR), and 383 to 402 (DIDPSELGKNKQPHVSICAD) contribute to the FAD site. Positions 478-558 (QHQMWATQHY…VKVMVLNNQH (81 aa)) are thiamine pyrophosphate binding. Asp529 and Asn556 together coordinate Mg(2+).

This sequence belongs to the TPP enzyme family. Requires Mg(2+) as cofactor. Thiamine diphosphate is required as a cofactor.

The protein localises to the plastid. It is found in the chloroplast. The catalysed reaction is 2 pyruvate + H(+) = (2S)-2-acetolactate + CO2. Its pathway is amino-acid biosynthesis; L-isoleucine biosynthesis; L-isoleucine from 2-oxobutanoate: step 1/4. The protein operates within amino-acid biosynthesis; L-valine biosynthesis; L-valine from pyruvate: step 1/4. The sequence is that of Probable acetolactate synthase 2, chloroplastic (ALS2) from Oryza sativa subsp. japonica (Rice).